Consider the following 127-residue polypeptide: Secreted RxLR effector protein 7 (127 aa).

A signal peptide spans 1-21 (MRSAYYVLTALLVVASSQVAA). A RxLR-dEER motif is present at residues 48-65 (RFLRESRDVHGNVANEER).

The protein belongs to the RxLR effector family.

The protein localises to the secreted. It localises to the host nucleus. It is found in the host cytoplasm. Its function is as follows. Secreted effector that completely suppresses the host cell death induced by cell death-inducing proteins. The chain is Secreted RxLR effector protein 7 from Plasmopara viticola (Downy mildew of grapevine).